A 100-amino-acid polypeptide reads, in one-letter code: Urease subunit gamma (100 aa).

The protein belongs to the urease gamma subunit family. As to quaternary structure, heterotrimer of UreA (gamma), UreB (beta) and UreC (alpha) subunits. Three heterotrimers associate to form the active enzyme.

It localises to the cytoplasm. It catalyses the reaction urea + 2 H2O + H(+) = hydrogencarbonate + 2 NH4(+). It functions in the pathway nitrogen metabolism; urea degradation; CO(2) and NH(3) from urea (urease route): step 1/1. This is Urease subunit gamma from Ectopseudomonas mendocina (strain ymp) (Pseudomonas mendocina).